The sequence spans 857 residues: Cadherin-related family member 1a (857 aa).

Positions 1-25 are cleaved as a signal peptide; the sequence is MKNAREIQFSSFLLLAHFCFVGAQS. Topologically, residues 26 to 709 are extracellular; that stretch reads DYAPYFYDNG…RENPMHFLGL (684 aa). 6 Cadherin domains span residues 40–139, 140–252, 253–359, 365–478, 479–582, and 574–693; these read NGNM…RPQF, QNMP…PPIF, IGTP…PPTF, PQNV…APKF, TSDF…PPAF, and DLND…GPLT. The helical transmembrane segment at 710–730 threads the bilayer; it reads ISGVILILVFVTVIISTVIFV. The Cytoplasmic portion of the chain corresponds to 731-857; the sequence is RRNKANRILP…LEQKNMANRY (127 aa). The tract at residues 746-765 is disordered; sequence RKKRKPQKQDDFQEPFREEQ. Residues 752-765 are compositionally biased toward basic and acidic residues; that stretch reads QKQDDFQEPFREEQ.

In terms of tissue distribution, expressed in photoreceptor cells of the outer nuclear layer of the retina and in the pinal gland.

The protein localises to the membrane. Its function is as follows. Potential calcium-dependent cell-adhesion protein. Plays a role in the organization of retinal cell layers and Muller glia morphology. The sequence is that of Cadherin-related family member 1a from Danio rerio (Zebrafish).